A 234-amino-acid chain; its full sequence is MSDDDRRRWKGPGPERQDSGRRSTERKVIARNARTESSKRWIERQLQDPYVRKAKDEGYRSRAAYKLLEIDAAAKILRKGMRVVDLGCAPGGWIQVSLQQGAAEVVGIDLLPLDPIEGATIIEGDVNNPDDVARMMAGLSGTPDLILSDMAANTTGHKQTDHLRTVALVEMAVAFAIEHLDDGGAFCAKVFQGGATKDVLNLLKQHFRTVKHIKPAASRAGSPEIYVVAKGFRR.

The tract at residues 1–37 (MSDDDRRRWKGPGPERQDSGRRSTERKVIARNARTES) is disordered. Residues G91, W93, D109, D125, and D149 each coordinate S-adenosyl-L-methionine. Catalysis depends on K189, which acts as the Proton acceptor.

The protein belongs to the class I-like SAM-binding methyltransferase superfamily. RNA methyltransferase RlmE family.

Its subcellular location is the cytoplasm. It carries out the reaction uridine(2552) in 23S rRNA + S-adenosyl-L-methionine = 2'-O-methyluridine(2552) in 23S rRNA + S-adenosyl-L-homocysteine + H(+). Its function is as follows. Specifically methylates the uridine in position 2552 of 23S rRNA at the 2'-O position of the ribose in the fully assembled 50S ribosomal subunit. This Hyphomonas neptunium (strain ATCC 15444) protein is Ribosomal RNA large subunit methyltransferase E.